The chain runs to 272 residues: Hydroxyethylthiazole kinase (272 aa).

Met62 serves as a coordination point for substrate. 2 residues coordinate ATP: Arg138 and Thr183. Residue Gly210 participates in substrate binding.

This sequence belongs to the Thz kinase family. Mg(2+) is required as a cofactor.

It carries out the reaction 5-(2-hydroxyethyl)-4-methylthiazole + ATP = 4-methyl-5-(2-phosphooxyethyl)-thiazole + ADP + H(+). It functions in the pathway cofactor biosynthesis; thiamine diphosphate biosynthesis; 4-methyl-5-(2-phosphoethyl)-thiazole from 5-(2-hydroxyethyl)-4-methylthiazole: step 1/1. In terms of biological role, catalyzes the phosphorylation of the hydroxyl group of 4-methyl-5-beta-hydroxyethylthiazole (THZ). The protein is Hydroxyethylthiazole kinase of Dichelobacter nodosus (strain VCS1703A).